We begin with the raw amino-acid sequence, 509 residues long: Maturase K (509 aa).

This sequence belongs to the intron maturase 2 family. MatK subfamily.

It is found in the plastid. It localises to the chloroplast. Functionally, usually encoded in the trnK tRNA gene intron. Probably assists in splicing its own and other chloroplast group II introns. The polypeptide is Maturase K (Portulaca oleracea (Common purslane)).